We begin with the raw amino-acid sequence, 186 residues long: Glutathione S-transferase 1, isoform A (186 aa).

Residues 1-81 (MDFYYLPGSA…YLVEKYCAHD (81 aa)) enclose the GST N-terminal domain. Residues S9, 50–52 (HCI), and 65–67 (ESR) contribute to the glutathione site. One can recognise a GST C-terminal domain in the interval 92–186 (DPRRRAVVHQ…RRCRVRSAAI (95 aa)).

It belongs to the GST superfamily. Theta family. As to quaternary structure, homodimer.

It catalyses the reaction RX + glutathione = an S-substituted glutathione + a halide anion + H(+). Functionally, conjugation of reduced glutathione to a wide number of exogenous and endogenous hydrophobic electrophiles. This Anopheles gambiae (African malaria mosquito) protein is Glutathione S-transferase 1, isoform A.